A 105-amino-acid chain; its full sequence is MKMIRAILRPDKVEEVVDALSNAGHVALTKMDVIGRGKQKGIRLDNIYYDELPKVMLLLVTPSEEIDDIIEIINETAFTGNFGDGKIFISPVEEAYTVRTRSKGL.

This sequence belongs to the P(II) protein family.

Could be involved in the regulation of nitrogen fixation. This chain is Nitrogen fixation nifHD region GlnB-like protein 1 (glnBA), found in Methanobacterium ivanovii.